Here is a 126-residue protein sequence, read N- to C-terminus: S-adenosylmethionine decarboxylase proenzyme (126 aa).

Residue S63 is the Schiff-base intermediate with substrate; via pyruvic acid of the active site. Position 63 is a pyruvic acid (Ser); by autocatalysis (S63). The active-site Proton acceptor; for processing activity is the H68. C83 serves as the catalytic Proton donor; for catalytic activity.

It belongs to the prokaryotic AdoMetDC family. Type 1 subfamily. In terms of assembly, heterotetramer of two alpha and two beta chains arranged as a dimer of alpha/beta heterodimers. Requires pyruvate as cofactor. In terms of processing, is synthesized initially as an inactive proenzyme. Formation of the active enzyme involves a self-maturation process in which the active site pyruvoyl group is generated from an internal serine residue via an autocatalytic post-translational modification. Two non-identical subunits are generated from the proenzyme in this reaction, and the pyruvate is formed at the N-terminus of the alpha chain, which is derived from the carboxyl end of the proenzyme. The post-translation cleavage follows an unusual pathway, termed non-hydrolytic serinolysis, in which the side chain hydroxyl group of the serine supplies its oxygen atom to form the C-terminus of the beta chain, while the remainder of the serine residue undergoes an oxidative deamination to produce ammonia and the pyruvoyl group blocking the N-terminus of the alpha chain.

The catalysed reaction is S-adenosyl-L-methionine + H(+) = S-adenosyl 3-(methylsulfanyl)propylamine + CO2. It participates in amine and polyamine biosynthesis; S-adenosylmethioninamine biosynthesis; S-adenosylmethioninamine from S-adenosyl-L-methionine: step 1/1. Functionally, catalyzes the decarboxylation of S-adenosylmethionine to S-adenosylmethioninamine (dcAdoMet), the propylamine donor required for the synthesis of the polyamines spermine and spermidine from the diamine putrescine. This is S-adenosylmethionine decarboxylase proenzyme from Syntrophomonas wolfei subsp. wolfei (strain DSM 2245B / Goettingen).